The sequence spans 218 residues: N-(5'-phosphoribosyl)anthranilate isomerase (218 aa).

Belongs to the TrpF family.

The enzyme catalyses N-(5-phospho-beta-D-ribosyl)anthranilate = 1-(2-carboxyphenylamino)-1-deoxy-D-ribulose 5-phosphate. The protein operates within amino-acid biosynthesis; L-tryptophan biosynthesis; L-tryptophan from chorismate: step 3/5. The chain is N-(5'-phosphoribosyl)anthranilate isomerase from Rhodopseudomonas palustris (strain HaA2).